We begin with the raw amino-acid sequence, 350 residues long: Lipoyl synthase (350 aa).

The segment at 1–39 (MSDTSSPKPVASGEKFRTAQGITAIKDGQKRRASAEPQV) is disordered. Residues Cys-73, Cys-78, Cys-84, Cys-99, Cys-103, Cys-106, and Ser-314 each contribute to the [4Fe-4S] cluster site. The 219-residue stretch at 85-303 (WSNGTATIML…RDIGLEKGFM (219 aa)) folds into the Radical SAM core domain.

It belongs to the radical SAM superfamily. Lipoyl synthase family. It depends on [4Fe-4S] cluster as a cofactor.

The protein resides in the cytoplasm. The catalysed reaction is [[Fe-S] cluster scaffold protein carrying a second [4Fe-4S](2+) cluster] + N(6)-octanoyl-L-lysyl-[protein] + 2 oxidized [2Fe-2S]-[ferredoxin] + 2 S-adenosyl-L-methionine + 4 H(+) = [[Fe-S] cluster scaffold protein] + N(6)-[(R)-dihydrolipoyl]-L-lysyl-[protein] + 4 Fe(3+) + 2 hydrogen sulfide + 2 5'-deoxyadenosine + 2 L-methionine + 2 reduced [2Fe-2S]-[ferredoxin]. It functions in the pathway protein modification; protein lipoylation via endogenous pathway; protein N(6)-(lipoyl)lysine from octanoyl-[acyl-carrier-protein]: step 2/2. Catalyzes the radical-mediated insertion of two sulfur atoms into the C-6 and C-8 positions of the octanoyl moiety bound to the lipoyl domains of lipoate-dependent enzymes, thereby converting the octanoylated domains into lipoylated derivatives. This is Lipoyl synthase from Ectopseudomonas mendocina (strain ymp) (Pseudomonas mendocina).